Here is a 145-residue protein sequence, read N- to C-terminus: NADH-quinone oxidoreductase subunit A (145 aa).

3 helical membrane passes run 14 to 34, 66 to 86, and 96 to 116; these read FAVFLIVSIGLCCLMLAGAWF, FYLVAMFFVIFDVEALYLYAW, and VGFVEAAIFILVLLAGLFYLV.

The protein belongs to the complex I subunit 3 family. As to quaternary structure, NDH-1 is composed of 13 different subunits. Subunits NuoA, H, J, K, L, M, N constitute the membrane sector of the complex.

It localises to the cell inner membrane. The catalysed reaction is a quinone + NADH + 5 H(+)(in) = a quinol + NAD(+) + 4 H(+)(out). In terms of biological role, NDH-1 shuttles electrons from NADH, via FMN and iron-sulfur (Fe-S) centers, to quinones in the respiratory chain. The immediate electron acceptor for the enzyme in this species is believed to be ubiquinone. Couples the redox reaction to proton translocation (for every two electrons transferred, four hydrogen ions are translocated across the cytoplasmic membrane), and thus conserves the redox energy in a proton gradient. In Erwinia tasmaniensis (strain DSM 17950 / CFBP 7177 / CIP 109463 / NCPPB 4357 / Et1/99), this protein is NADH-quinone oxidoreductase subunit A.